The following is an 892-amino-acid chain: Translation initiation factor IF-2 (892 aa).

The interval 51–296 (REHGSAPNKL…KGKRKPSTLQ (246 aa)) is disordered. Polar residues predominate over residues 68–82 (STLNIPSTGGKSKSV). The span at 99-217 (EQAKAEEQAQ…KMAAENEGKW (119 aa)) shows a compositional bias: basic and acidic residues. The segment covering 224 to 237 (QTESADYHVTTSQH) has biased composition (polar residues). The span at 239 to 254 (RAAEDENDAKVEGDRR) shows a compositional bias: basic and acidic residues. Positions 255 to 269 (SRTRGGKATKQKKGN) are enriched in basic residues. A compositionally biased stretch (basic and acidic residues) spans 270–283 (KLSESKADREEARA). A tr-type G domain is found at 391–560 (HRAPVVTIMG…LLQAEVMELK (170 aa)). The tract at residues 400–407 (GHVDHGKT) is G1. 400 to 407 (GHVDHGKT) serves as a coordination point for GTP. The segment at 425 to 429 (GITQH) is G2. Residues 446–449 (DTPG) are G3. Residues 446–450 (DTPGH) and 500–503 (NKID) each bind GTP. The G4 stretch occupies residues 500-503 (NKID). The G5 stretch occupies residues 536–538 (SAK).

Belongs to the TRAFAC class translation factor GTPase superfamily. Classic translation factor GTPase family. IF-2 subfamily.

The protein resides in the cytoplasm. Functionally, one of the essential components for the initiation of protein synthesis. Protects formylmethionyl-tRNA from spontaneous hydrolysis and promotes its binding to the 30S ribosomal subunits. Also involved in the hydrolysis of GTP during the formation of the 70S ribosomal complex. This Yersinia enterocolitica serotype O:8 / biotype 1B (strain NCTC 13174 / 8081) protein is Translation initiation factor IF-2.